The primary structure comprises 60 residues: UPF0434 protein ETA_21370 (60 aa).

Belongs to the UPF0434 family.

This chain is UPF0434 protein ETA_21370, found in Erwinia tasmaniensis (strain DSM 17950 / CFBP 7177 / CIP 109463 / NCPPB 4357 / Et1/99).